The following is a 260-amino-acid chain: Voltage-dependent calcium channel gamma-6 subunit (260 aa).

4 helical membrane-spanning segments follow: residues 43-63, 143-163, 169-189, and 221-241; these read LLVAIVGATLAVLAVGTEFWV, VIAVLGLTAMALGCLCVIMVL, FLLRLGAVCFGLSGLLLFVSL, and LGCGVGAGLILLLGGVCFLLL.

It belongs to the PMP-22/EMP/MP20 family. CACNG subfamily. Interacts with CACNA1C. Identified in a complex with the L-type calcium channel subunits CACNA1C, CACNA2D1 and either CACNB1 or CACNB2. In terms of tissue distribution, detected in heart atrium and ventricle, aorta and skeletal muscle. Detected in heart left ventricle.

The protein localises to the cell membrane. Functionally, regulates the activity of L-type calcium channels that contain CACNA1C as pore-forming subunit. In Rattus norvegicus (Rat), this protein is Voltage-dependent calcium channel gamma-6 subunit (Cacng6).